The chain runs to 163 residues: Nucleotide-binding protein SACE_6882 (163 aa).

This sequence belongs to the YajQ family.

Its function is as follows. Nucleotide-binding protein. The sequence is that of Nucleotide-binding protein SACE_6882 from Saccharopolyspora erythraea (strain ATCC 11635 / DSM 40517 / JCM 4748 / NBRC 13426 / NCIMB 8594 / NRRL 2338).